Here is a 165-residue protein sequence, read N- to C-terminus: Protein SprT (165 aa).

The SprT-like domain maps to 20 to 163 (EKLAQANLKL…RCVHCGEQLV (144 aa)). Residue His78 coordinates Zn(2+). Residue Glu79 is part of the active site. His82 is a binding site for Zn(2+).

The protein belongs to the SprT family. Zn(2+) is required as a cofactor.

The protein localises to the cytoplasm. In Shigella flexneri serotype 5b (strain 8401), this protein is Protein SprT.